Consider the following 425-residue polypeptide: 3-isopropylmalate dehydratase large subunit (425 aa).

3 residues coordinate [4Fe-4S] cluster: Cys305, Cys365, and Cys368.

This sequence belongs to the aconitase/IPM isomerase family. LeuC type 2 subfamily. In terms of assembly, heterodimer of LeuC and LeuD. The cofactor is [4Fe-4S] cluster.

The enzyme catalyses (2R,3S)-3-isopropylmalate = (2S)-2-isopropylmalate. It functions in the pathway amino-acid biosynthesis; L-leucine biosynthesis; L-leucine from 3-methyl-2-oxobutanoate: step 2/4. Functionally, catalyzes the isomerization between 2-isopropylmalate and 3-isopropylmalate, via the formation of 2-isopropylmaleate. This Clostridioides difficile (strain 630) (Peptoclostridium difficile) protein is 3-isopropylmalate dehydratase large subunit.